The chain runs to 1568 residues: Plexin-C1 (1568 aa).

The signal sequence occupies residues 1-34 (MEVSRRKAPPRPPRPAAPLPLLAYLLALAAPGRG). The Sema domain occupies 35 to 452 (ADEPVWRSEQ…AGKEVRRIRV (418 aa)). Residues 35–944 (ADEPVWRSEQ…YVEQESVPST (910 aa)) are Extracellular-facing. A disulfide bridge links Cys64 with Cys87. N-linked (GlcNAc...) asparagine glycosylation is found at Asn86, Asn141, and Asn149. 3 disulfide bridges follow: Cys156–Cys194, Cys226–Cys354, and Cys283–Cys329. N-linked (GlcNAc...) asparagine glycosylation is found at Asn241 and Asn252. Residues Asn386 and Asn407 are each glycosylated (N-linked (GlcNAc...) asparagine). Disulfide bonds link Cys455–Cys472, Cys461–Cys506, Cys464–Cys481, and Cys475–Cys487. N-linked (GlcNAc...) asparagine glycosylation is found at Asn548, Asn582, Asn653, Asn692, Asn771, Asn796, Asn821, Asn871, and Asn890. The chain crosses the membrane as a helical span at residues 945-965 (WYFLIVLPVLLVIVIFAAVGV). The Cytoplasmic portion of the chain corresponds to 966–1568 (TRHKSKELSR…FDEKKKCKWM (603 aa)). At Ser978 the chain carries Phosphoserine.

This sequence belongs to the plexin family. As to quaternary structure, monomer. Homodimer. Interacts with SEMA7A. Post-translationally, N-glycosylated. In terms of tissue distribution, detected in heart, brain, lung, spleen and placenta.

Its subcellular location is the membrane. Its function is as follows. Receptor for SEMA7A, for smallpox semaphorin A39R, vaccinia virus semaphorin A39R and for herpesvirus Sema protein. Binding of semaphorins triggers cellular responses leading to the rearrangement of the cytoskeleton and to secretion of IL6 and IL8. This Homo sapiens (Human) protein is Plexin-C1 (PLXNC1).